A 533-amino-acid polypeptide reads, in one-letter code: Retinoic acid receptor RXR-beta (533 aa).

Residues 1 to 24 (MSWAARPPFLPQRHAAGQCGPVGV) are disordered. Positions 1 to 204 (MSWAARPPFL…PGGPGAGKRL (204 aa)) are modulating. The residue at position 25 (Arg-25) is an Omega-N-methylarginine. The segment at 37 to 183 (RRRRPWLDPA…GPPEDVKPPV (147 aa)) is disordered. The span at 46–61 (AAAAAAAAAAGEQQTP) shows a compositional bias: low complexity. Residues 67-82 (EAGRDGMGDSGRDSRS) show a composition bias toward basic and acidic residues. The segment covering 83 to 94 (PDSSSPNPLSQG) has biased composition (low complexity). Composition is skewed to pro residues over residues 95–109 (APPP…PPSS) and 118–129 (APPPPPMPPPQL). Positions 130–143 (GSPFPVISSSMGSP) are enriched in low complexity. Residues 144–153 (GLPPPAPPGF) are compositionally biased toward pro residues. 2 consecutive NR C4-type zinc fingers follow at residues 205 to 225 (CAIC…CEGC) and 241 to 265 (CRDN…YQKC). The nuclear receptor DNA-binding region spans 205-270 (CAICGDRSSG…RYQKCLATGM (66 aa)). The hinge stretch occupies residues 271–295 (KREAVQEERQRGKDKDGDGEGAGGA). A compositionally biased stretch (basic and acidic residues) spans 276-288 (QEERQRGKDKDGD). Disordered stretches follow at residues 276-299 (QEER…PEEM) and 313-336 (QKSD…NDPV). One can recognise an NR LBD domain in the interval 296-529 (PEEMPVDRIL…TFLMEMLEAP (234 aa)). Positions 320–329 (EGPGGTGGSG) are enriched in gly residues.

The protein belongs to the nuclear hormone receptor family. NR2 subfamily. As to quaternary structure, homodimer (in vitro). Heterodimer with other retinoic acid receptor family members. Binds DNA preferentially as a RAR/RXR heterodimer. Interacts with NR1H3. Interacts with AKAP13.

Its subcellular location is the nucleus. It is found in the cytoplasm. Its function is as follows. Receptor for retinoic acid. Retinoic acid receptors bind as heterodimers to their target response elements in response to their ligands, all-trans or 9-cis retinoic acid, and regulate gene expression in various biological processes. The RAR/RXR heterodimers bind to the retinoic acid response elements (RARE). This is Retinoic acid receptor RXR-beta (RXRB) from Canis lupus familiaris (Dog).